The primary structure comprises 1217 residues: ATP-dependent helicase/nuclease subunit A (1217 aa).

Residues 10 to 475 (VIWTDAQWQS…IDLSQNFRSR (466 aa)) form the UvrD-like helicase ATP-binding domain. ATP is bound at residue 31–38 (AAAGSGKT). Residues 476–786 (KEVLSTTNYI…RMMTIHSSKG (311 aa)) enclose the UvrD-like helicase C-terminal domain.

Belongs to the helicase family. AddA subfamily. As to quaternary structure, heterodimer of AddA and AddB/RexB. Mg(2+) serves as cofactor.

It catalyses the reaction Couples ATP hydrolysis with the unwinding of duplex DNA by translocating in the 3'-5' direction.. It carries out the reaction ATP + H2O = ADP + phosphate + H(+). In terms of biological role, the heterodimer acts as both an ATP-dependent DNA helicase and an ATP-dependent, dual-direction single-stranded exonuclease. Recognizes the chi site generating a DNA molecule suitable for the initiation of homologous recombination. The AddA nuclease domain is required for chi fragment generation; this subunit has the helicase and 3' -&gt; 5' nuclease activities. The protein is ATP-dependent helicase/nuclease subunit A of Staphylococcus aureus (strain Mu3 / ATCC 700698).